A 123-amino-acid polypeptide reads, in one-letter code: Small ribosomal subunit protein uS13 (123 aa).

The segment at 97 to 123 is disordered; the sequence is PVRGQRTHTNAKTRKGRSKLPVAAKKK.

Belongs to the universal ribosomal protein uS13 family. In terms of assembly, part of the 30S ribosomal subunit. Forms a loose heterodimer with protein S19. Forms two bridges to the 50S subunit in the 70S ribosome.

In terms of biological role, located at the top of the head of the 30S subunit, it contacts several helices of the 16S rRNA. In the 70S ribosome it contacts the 23S rRNA (bridge B1a) and protein L5 of the 50S subunit (bridge B1b), connecting the 2 subunits; these bridges are implicated in subunit movement. Contacts the tRNAs in the A and P-sites. This is Small ribosomal subunit protein uS13 from Ehrlichia canis (strain Jake).